A 249-amino-acid polypeptide reads, in one-letter code: Fatty acid elongase 5 (249 aa).

Transmembrane regions (helical) follow at residues 23–43 (VFVN…VIVL), 68–88 (VALS…GVFN), and 100–120 (WIFV…FIVL). Residues 131–135 (HIYHH) carry the HxxHH motif motif. His-134 serves as the catalytic Nucleophile. 4 helical membrane passes run 138-158 (IGFI…AFFG), 159-179 (AWIN…TSLG), 193-213 (MIQF…HSPI), and 217-236 (WAVL…MRFY).

This sequence belongs to the ELO family.

It localises to the membrane. The catalysed reaction is an acyl-CoA + malonyl-CoA + H(+) = a 3-oxoacyl-CoA + CO2 + CoA. It functions in the pathway lipid metabolism; polyunsaturated fatty acid biosynthesis. Functionally, involved in the synthesis of fatty acids. Elongates C20 polyunsaturated fatty acids (PUFAs) with a preference for n-6 PUFAs. The polypeptide is Fatty acid elongase 5 (Leishmania major).